The primary structure comprises 347 residues: Protein PET130 (347 aa).

Its subcellular location is the mitochondrion matrix. The sequence is that of Protein PET130 (PET130) from Saccharomyces cerevisiae (strain ATCC 204508 / S288c) (Baker's yeast).